The chain runs to 87 residues: Small ribosomal subunit protein bS20 (87 aa).

Basic residues predominate over residues 1-19; that stretch reads MANHKSALKRHRQSIKRNL. The disordered stretch occupies residues 1–22; that stretch reads MANHKSALKRHRQSIKRNLRNN.

The protein belongs to the bacterial ribosomal protein bS20 family.

In terms of biological role, binds directly to 16S ribosomal RNA. This chain is Small ribosomal subunit protein bS20, found in Maridesulfovibrio salexigens (strain ATCC 14822 / DSM 2638 / NCIMB 8403 / VKM B-1763) (Desulfovibrio salexigens).